A 546-amino-acid chain; its full sequence is CTP synthase (546 aa).

Positions 1 to 266 are amidoligase domain; the sequence is MTTNYIFVTG…DDLVCQRFGI (266 aa). S14 is a CTP binding site. S14 contacts UTP. Residues 15-20 and D72 contribute to the ATP site; that span reads SLGKGI. Positions 72 and 140 each coordinate Mg(2+). CTP is bound by residues 147–149, 187–192, and K223; these read DIE and KTKPTQ. UTP is bound by residues 187 to 192 and K223; that span reads KTKPTQ. 239–241 provides a ligand contact to ATP; it reads KDV. The 252-residue stretch at 291-542 folds into the Glutamine amidotransferase type-1 domain; it reads TIGMVGKYIE…VKAAGENARG (252 aa). G352 lines the L-glutamine pocket. The active-site Nucleophile; for glutamine hydrolysis is C379. L-glutamine is bound by residues 380 to 383, E403, and R470; that span reads LGMQ. Catalysis depends on residues H515 and E517.

It belongs to the CTP synthase family. As to quaternary structure, homotetramer.

It catalyses the reaction UTP + L-glutamine + ATP + H2O = CTP + L-glutamate + ADP + phosphate + 2 H(+). The catalysed reaction is L-glutamine + H2O = L-glutamate + NH4(+). The enzyme catalyses UTP + NH4(+) + ATP = CTP + ADP + phosphate + 2 H(+). It functions in the pathway pyrimidine metabolism; CTP biosynthesis via de novo pathway; CTP from UDP: step 2/2. Its activity is regulated as follows. Allosterically activated by GTP, when glutamine is the substrate; GTP has no effect on the reaction when ammonia is the substrate. The allosteric effector GTP functions by stabilizing the protein conformation that binds the tetrahedral intermediate(s) formed during glutamine hydrolysis. Inhibited by the product CTP, via allosteric rather than competitive inhibition. Its function is as follows. Catalyzes the ATP-dependent amination of UTP to CTP with either L-glutamine or ammonia as the source of nitrogen. Regulates intracellular CTP levels through interactions with the four ribonucleotide triphosphates. The chain is CTP synthase from Aliivibrio salmonicida (strain LFI1238) (Vibrio salmonicida (strain LFI1238)).